We begin with the raw amino-acid sequence, 330 residues long: SUMO-activating enzyme subunit 1 (330 aa).

Belongs to the ubiquitin-activating E1 family. In terms of assembly, heterodimer of sae1 and sae2. The complex binds sumo via sae2.

Its subcellular location is the nucleus. Its pathway is protein modification; protein sumoylation. Functionally, the dimeric enzyme acts as an E1 ligase for sumo. It mediates ATP-dependent activation of sumo and formation of a thioester with a conserved cysteine residue on sae2. The polypeptide is SUMO-activating enzyme subunit 1 (sae1) (Dictyostelium discoideum (Social amoeba)).